The primary structure comprises 489 residues: MGNDKEKYSKLRNIIPEMRRVKHIYFVGIGGAGMGGIAEVLVNEGYRLSGSDIAENAVTQRLASLGAKIHLGHKEEQVHGADVVVVSTAIHADNPELLEAQALRIPVVRRAEMLAELMRYRHGVAVAGTHGKTTTTSLIASVYGQAERDPTFVIGGLLNSAGTNARLGNSRYLIAEADESDASFLHLQPMVSVITNIEADHMDTYEGDFERLKSTFIDFLHNLPFYGIAVMCIDDPVVRELLPSVGRKIVTYGFSEDADVQALNFVQDGYRSRFTLRRTGVEDVEVMVNLPGEHNVLNALAAIAVASEDEIEDEAIIQALADFEGIGRRFEQLGCFDTDRGEVVLVDDYGHHPSEVAATIKAAKLGWPEKRLVMIYQPHRYSRTRDLYEDFVEVLSQVDCLLLLDVYSAGEAAIPGADSRALCRSIRLRGQLDPIFVADQEQLLTLLPDVLQEGDLLLTQGAGNIGALARQLAQNRLGFESTNNDSNRG.

Position 128–134 (128–134 (GTHGKTT)) interacts with ATP.

This sequence belongs to the MurCDEF family.

Its subcellular location is the cytoplasm. The enzyme catalyses UDP-N-acetyl-alpha-D-muramate + L-alanine + ATP = UDP-N-acetyl-alpha-D-muramoyl-L-alanine + ADP + phosphate + H(+). It functions in the pathway cell wall biogenesis; peptidoglycan biosynthesis. Functionally, cell wall formation. This is UDP-N-acetylmuramate--L-alanine ligase from Shewanella woodyi (strain ATCC 51908 / MS32).